The following is a 369-amino-acid chain: Delta(14)-sterol reductase (369 aa).

The next 7 membrane-spanning stretches (helical) occupy residues 15 to 34, 54 to 76, 86 to 105, 146 to 168, 178 to 195, 208 to 230, and 240 to 262; these read QSVYVLVFYFVYLAVAGEIL, CNGLLALILLVAILGICAKLGIV, LELLSATFIFCVLVTLALYV, FFFVRAGMMGWLLINLSILAKSV, ILYQIFCALYILDYFVHE, RLGFMLVFGDLLWIPFTFSIQGW, and TVPAIVVNCLVFLIGYMVFRGAN. NADP(+) contacts are provided by residues lysine 265, lysine 269, leucine 289, tryptophan 294, and 301–302; that span reads NY. The helical transmembrane segment at 275–297 threads the bilayer; that stretch reads PIWGKPPVVVGGKLLVSGYWGIA. Residues 317–336 form a helical membrane-spanning segment; it reads GISSPVPYFYPIYLLILLIW. Residues aspartate 341, 345–349, and tyrosine 356 each bind NADP(+); that span reads CAEKY.

Belongs to the ERG4/ERG24 family.

It is found in the membrane. The enzyme catalyses 4,4-dimethyl-5alpha-cholesta-8,24-dien-3beta-ol + NADP(+) = 4,4-dimethyl-5alpha-cholesta-8,14,24-trien-3beta-ol + NADPH + H(+). The protein operates within steroid biosynthesis; zymosterol biosynthesis; zymosterol from lanosterol: step 2/6. Its function is as follows. Reduces the C14=C15 double bond of 4,4-dimethyl-cholesta-8,14,24-trienol to produce 4,4-dimethyl-cholesta-8,24-dienol. Required for cell division and expansion and is involved in proper organization of the embryo. This chain is Delta(14)-sterol reductase (FK), found in Arabidopsis thaliana (Mouse-ear cress).